Reading from the N-terminus, the 282-residue chain is 4-diphosphocytidyl-2-C-methyl-D-erythritol kinase (282 aa).

Residue Lys15 is part of the active site. 98-108 (PMGGGVGGGSS) contacts ATP. Asp140 is a catalytic residue.

It belongs to the GHMP kinase family. IspE subfamily.

The enzyme catalyses 4-CDP-2-C-methyl-D-erythritol + ATP = 4-CDP-2-C-methyl-D-erythritol 2-phosphate + ADP + H(+). Its pathway is isoprenoid biosynthesis; isopentenyl diphosphate biosynthesis via DXP pathway; isopentenyl diphosphate from 1-deoxy-D-xylulose 5-phosphate: step 3/6. Functionally, catalyzes the phosphorylation of the position 2 hydroxy group of 4-diphosphocytidyl-2C-methyl-D-erythritol. The protein is 4-diphosphocytidyl-2-C-methyl-D-erythritol kinase of Azoarcus sp. (strain BH72).